The following is a 164-amino-acid chain: PTS system sorbose-specific EIIB component (164 aa).

Residues 1–164 (MIITLARVDD…AKIDEVFGKE (164 aa)) form the PTS EIIB type-4 domain. Catalysis depends on His14, which acts as the Pros-phosphohistidine intermediate. At His14 the chain carries Phosphohistidine; by EIIA.

It localises to the cytoplasm. The catalysed reaction is keto-L-sorbose(out) + N(pros)-phospho-L-histidyl-[protein] = L-sorbose 1-phosphate(in) + L-histidyl-[protein]. In terms of biological role, the phosphoenolpyruvate-dependent sugar phosphotransferase system (PTS), a major carbohydrate active transport system, catalyzes the phosphorylation of incoming sugar substrates concomitant with their translocation across the cell membrane. The enzyme II SorABCD PTS system is involved in L-sorbose transport. The sequence is that of PTS system sorbose-specific EIIB component from Lacticaseibacillus casei (Lactobacillus casei).